The chain runs to 66 residues: FMRFamide-like neuropeptide 21 (66 aa).

The N-terminal stretch at 1–16 is a signal peptide; sequence MRLFILLSCLLAWVLA.

This sequence belongs to the FARP (FMRFamide related peptide) family. In terms of processing, may be processed by convertase egl-3. As to expression, expressed in the ADL, ASE and ASH sensory neurons, the URA motor neurons and the MC, M2 and M4 pharyngeal neurons.

The protein resides in the secreted. Its function is as follows. FMRFamide-like neuropeptide. Involved in modulating locomotion quiescence during the sleep-like state called lethargus which occurs during molting between larval and adult stages, acting via the G-protein coupled receptor npr-1. Plays a role in modulating social and feeding behavior. Functionally, ligand to G-protein coupled receptor npr-1. This Caenorhabditis elegans protein is FMRFamide-like neuropeptide 21.